A 141-amino-acid chain; its full sequence is Large ribosomal subunit protein uL11 (141 aa).

The protein belongs to the universal ribosomal protein uL11 family. In terms of assembly, part of the ribosomal stalk of the 50S ribosomal subunit. Interacts with L10 and the large rRNA to form the base of the stalk. L10 forms an elongated spine to which L12 dimers bind in a sequential fashion forming a multimeric L10(L12)X complex. In terms of processing, one or more lysine residues are methylated.

Forms part of the ribosomal stalk which helps the ribosome interact with GTP-bound translation factors. The protein is Large ribosomal subunit protein uL11 of Oceanobacillus iheyensis (strain DSM 14371 / CIP 107618 / JCM 11309 / KCTC 3954 / HTE831).